Reading from the N-terminus, the 908-residue chain is Metabotropic glutamate receptor 8 (908 aa).

A signal peptide spans 1 to 33; it reads MVCEGKRLASCPCFFLLTAKFYWILTMMQRTHS. Residues 34–583 lie on the Extracellular side of the membrane; sequence QEYAHSIRVD…IIKLEWHSPW (550 aa). A disulfide bridge links C64 with C106. N95 is a glycosylation site (N-linked (GlcNAc...) asparagine). L-glutamate is bound by residues S156, 177-179, and Y227; that span reads AST. 7 cysteine pairs are disulfide-bonded: C246-C534, C369-C384, C424-C431, C516-C535, C520-C538, C541-C553, and C556-C569. A glycan (N-linked (GlcNAc...) asparagine) is linked at N298. Residue D309 coordinates L-glutamate. An L-glutamate-binding site is contributed by K401. Residues N452 and N480 are each glycosylated (N-linked (GlcNAc...) asparagine). N-linked (GlcNAc...) asparagine glycosylation occurs at N565. Residues 584–608 traverse the membrane as a helical segment; it reads AVVPVFIAILGIIATTFVIVTFVRY. Over 609–620 the chain is Cytoplasmic; that stretch reads NDTPIVRASGRE. The helical transmembrane segment at 621 to 641 threads the bilayer; it reads LSYVLLTGIFLCYSITFLMIA. The Extracellular segment spans residues 642–647; sequence APDTII. The chain crosses the membrane as a helical span at residues 648–668; that stretch reads CSFRRIFLGLGMCFSYAALLT. Residues 669–695 are Cytoplasmic-facing; the sequence is KTNRIHRIFEQGKKSVTAPKFISPASQ. The helical transmembrane segment at 696-716 threads the bilayer; the sequence is LVITFSLISVQLLGVFVWFVV. Residues 717-746 are Extracellular-facing; the sequence is DPPHTIIDYGEQRTLDPENARGVLKCDISD. A helical membrane pass occupies residues 747–768; the sequence is LSLICSLGYSILLMVTCTVYAI. Residues 769–781 are Cytoplasmic-facing; the sequence is KTRGVPETFNEAK. A helical membrane pass occupies residues 782–803; that stretch reads PIGFTMYTTCIIWLAFIPIFFG. Topologically, residues 804–818 are extracellular; that stretch reads TAQSAEKMYIQTTTL. A helical transmembrane segment spans residues 819-843; that stretch reads TVSMSLSASVSLGMLYMPKVYIIIF. Residues 844–908 are Cytoplasmic-facing; that stretch reads HPEQNVQKRK…TYISYSNHSI (65 aa). K882 participates in a covalent cross-link: Glycyl lysine isopeptide (Lys-Gly) (interchain with G-Cter in SUMO1).

This sequence belongs to the G-protein coupled receptor 3 family. In terms of assembly, interacts with PICK1. As to expression, prominent expression in olfactory bulb, pontine gray, lateral reticular nucleus of the thalamus, and piriform cortex. Less abundant expression incerebral cortex, hippocampus, cerebellum, and mammillary body.

It is found in the cell membrane. G-protein coupled receptor for glutamate. Ligand binding causes a conformation change that triggers signaling via guanine nucleotide-binding proteins (G proteins) and modulates the activity of down-stream effectors. Signaling inhibits adenylate cyclase activity. This is Metabotropic glutamate receptor 8 (Grm8) from Rattus norvegicus (Rat).